Reading from the N-terminus, the 157-residue chain is Protein Smg homolog (157 aa).

Belongs to the Smg family.

The sequence is that of Protein Smg homolog from Shewanella frigidimarina (strain NCIMB 400).